The primary structure comprises 252 residues: Short-chain dehydrogenase/reductase eriH (252 aa).

NADP(+) is bound by residues Ile-16, Asp-65, Asn-92, Lys-125, Tyr-158, Lys-162, Val-191, and Thr-193. The active-site Proton acceptor is Tyr-158. Residue Tyr-158 is the Proton donor of the active site. The active-site Lowers pKa of active site Tyr is the Lys-162.

This sequence belongs to the short-chain dehydrogenases/reductases (SDR) family.

The enzyme catalyses cyathadiol + reduced [NADPH--hemoprotein reductase] + O2 = cyathatriol + oxidized [NADPH--hemoprotein reductase] + H2O + H(+). The catalysed reaction is 11-O-acetylcyathatriol + A = 11-O-acetylcyathin A3 + AH2. It carries out the reaction cyathatriol + A = cyathin A3 + AH2. Its pathway is secondary metabolite biosynthesis. Short-chain dehydrogenase/reductase; part of the gene cluster that mediates the biosynthesis of erinacines, cyathane-xylosides that show unique biological activities, including leishmanicidal activity, stimulating activity for nerve growth-factor synthesis, and agonistic activity toward the kappa opioid receptor. Within the pathway, eriH works with eriA to catalyze C-11 hydroxylation of cyathadiol to produce cyathatriol. EriH also catalyzes oxidation of 11-O-acetyl-cyathatriol into 1-O-acetylcyathin A3. In the absence of eriL and eriJ, the SDR eriH is able to convert cyathatriol to cyathin A3; this is likely a switching mechanism in the biosynthesis of cyathins (C-14 ketogroup)and erinacines (C-14 glycosylated group). The first step of the erinacines biosynthesis pathway is catalyzed by the geranylgeranyl diphosphate (GGPP) synthase eriE via conversion of farnesyl pyrophosphate and isopentyl pyrophosphate into geranylgeranyl pyrophosphate (GGPP). GGPP is then substrate of the diterpene cyclase eriG for the production of cyatha-3,12-diene. The cytochrome P450 monooxygenase eriI then hydroxylates cyatha-3,12-diene at C-14 of the seven-membered ring to produce erinacol, which is further hydroxylated at C-15 by the cytochrome P450 monooxygenase eriC to yield cyathadiol. The cytochrome P450 monooxygenase eriA then catalyzes C-11 hydroxylation in the presence of the short chain dehydrogenase/reductase (SDR) eriH, which leads to the production of cyathatriol. The acetyltransferase eriL converts cyathatriol into 11-O-acetyl-cyathatriol. The SDR eriH catalyzes further oxidation of 11-O-acetyl-cyathatriol into 1-O-acetylcyathin A3. Finally, the glycosyl transferase eriJ tranfers xylose from UDP-xylose onto C-14 of 11-O-acetyl-cyathatriol to form eracine Q. EriJ is also able to convert 11-O-acetyl-cyathatriol to eracine Q2 by using UDP-D-glucose as cosubstrate, but at a lower rate. This is Short-chain dehydrogenase/reductase eriH from Hericium erinaceus (Lion's mane mushroom).